Reading from the N-terminus, the 284-residue chain is Quinate/shikimate dehydrogenase (NAD(+)) (284 aa).

Residues serine 18 and threonine 70 each coordinate shikimate. Residues 18–20 and threonine 70 each bind L-quinate; that span reads SRT. Tyrosine 73 functions as the Proton acceptor in the catalytic mechanism. Shikimate-binding residues include lysine 74, asparagine 95, and aspartate 111. L-quinate-binding residues include lysine 74, asparagine 95, and aspartate 111. NAD(+) is bound by residues 137-138, aspartate 159, arginine 164, 203-206, alanine 214, valine 229, and glycine 252; these read GG and TPMG. Residue glutamine 259 coordinates shikimate. Glutamine 259 is a binding site for L-quinate.

The protein belongs to the shikimate dehydrogenase family. In terms of assembly, homodimer.

The catalysed reaction is L-quinate + NAD(+) = 3-dehydroquinate + NADH + H(+). It carries out the reaction shikimate + NAD(+) = 3-dehydroshikimate + NADH + H(+). It participates in metabolic intermediate biosynthesis; chorismate biosynthesis; chorismate from D-erythrose 4-phosphate and phosphoenolpyruvate: step 4/7. Its pathway is aromatic compound metabolism; 3,4-dihydroxybenzoate biosynthesis; 3-dehydroquinate from D-quinate (NAD(+) route). Functionally, involved in the biosynthesis of the chorismate, which leads to the biosynthesis of aromatic amino acids, and plays a key role in the quinate degradation pathway. Catalyzes the NAD(+)-dependent oxidation of both quinate and shikimate to 3-dehydroquinate and 3-dehydroshikimate, respectively. It can only use NAD. The sequence is that of Quinate/shikimate dehydrogenase (NAD(+)) from Corynebacterium efficiens (strain DSM 44549 / YS-314 / AJ 12310 / JCM 11189 / NBRC 100395).